The sequence spans 367 residues: GTP cyclohydrolase FolE2 (367 aa).

The protein belongs to the GTP cyclohydrolase IV family.

The enzyme catalyses GTP + H2O = 7,8-dihydroneopterin 3'-triphosphate + formate + H(+). The protein operates within cofactor biosynthesis; 7,8-dihydroneopterin triphosphate biosynthesis; 7,8-dihydroneopterin triphosphate from GTP: step 1/1. Functionally, converts GTP to 7,8-dihydroneopterin triphosphate. The chain is GTP cyclohydrolase FolE2 from Ruegeria pomeroyi (strain ATCC 700808 / DSM 15171 / DSS-3) (Silicibacter pomeroyi).